Here is a 330-residue protein sequence, read N- to C-terminus: Flotillin-like protein FloA (330 aa).

2 consecutive transmembrane segments (helical) span residues 5 to 25 (IILPIIIIAAVLIALAILFTF) and 28 to 48 (VALWISALAAGVKISIFTLIG).

The protein belongs to the flotillin-like FloA family. Homooligomerizes.

It localises to the cell membrane. Its subcellular location is the membrane raft. Found in functional membrane microdomains (FMM) that may be equivalent to eukaryotic membrane rafts. FMMs are highly dynamic and increase in number as cells age. Flotillins are thought to be important factors in membrane fluidity. The sequence is that of Flotillin-like protein FloA from Oceanobacillus iheyensis (strain DSM 14371 / CIP 107618 / JCM 11309 / KCTC 3954 / HTE831).